Reading from the N-terminus, the 833-residue chain is Leucine--tRNA ligase (833 aa).

Positions 41-52 (PYPSGAGLHVGH) match the 'HIGH' region motif. A 'KMSKS' region motif is present at residues 610-614 (KMSKS). K613 serves as a coordination point for ATP.

Belongs to the class-I aminoacyl-tRNA synthetase family.

It localises to the cytoplasm. The catalysed reaction is tRNA(Leu) + L-leucine + ATP = L-leucyl-tRNA(Leu) + AMP + diphosphate. This is Leucine--tRNA ligase from Streptococcus pneumoniae (strain CGSP14).